A 598-amino-acid chain; its full sequence is NADH-quinone oxidoreductase subunit C/D (598 aa).

The interval 1–190 (MSIFTQEVSA…EAFSLDDERL (190 aa)) is NADH dehydrogenase I subunit C. The interval 214 to 598 (DYLFLNLGPN…IDFVMADVDR (385 aa)) is NADH dehydrogenase I subunit D.

In the N-terminal section; belongs to the complex I 30 kDa subunit family. This sequence in the C-terminal section; belongs to the complex I 49 kDa subunit family. As to quaternary structure, NDH-1 is composed of 13 different subunits. Subunits NuoB, CD, E, F, and G constitute the peripheral sector of the complex.

It localises to the cell inner membrane. The catalysed reaction is a quinone + NADH + 5 H(+)(in) = a quinol + NAD(+) + 4 H(+)(out). Its function is as follows. NDH-1 shuttles electrons from NADH, via FMN and iron-sulfur (Fe-S) centers, to quinones in the respiratory chain. The immediate electron acceptor for the enzyme in this species is believed to be ubiquinone. Couples the redox reaction to proton translocation (for every two electrons transferred, four hydrogen ions are translocated across the cytoplasmic membrane), and thus conserves the redox energy in a proton gradient. In Shewanella woodyi (strain ATCC 51908 / MS32), this protein is NADH-quinone oxidoreductase subunit C/D.